Reading from the N-terminus, the 72-residue chain is Translation initiation factor IF-1 (72 aa).

An S1-like domain is found at 1–72 (MSKDDCIEFE…TKGRIIYRMK (72 aa)).

It belongs to the IF-1 family. As to quaternary structure, component of the 30S ribosomal translation pre-initiation complex which assembles on the 30S ribosome in the order IF-2 and IF-3, IF-1 and N-formylmethionyl-tRNA(fMet); mRNA recruitment can occur at any time during PIC assembly.

It localises to the cytoplasm. Functionally, one of the essential components for the initiation of protein synthesis. Stabilizes the binding of IF-2 and IF-3 on the 30S subunit to which N-formylmethionyl-tRNA(fMet) subsequently binds. Helps modulate mRNA selection, yielding the 30S pre-initiation complex (PIC). Upon addition of the 50S ribosomal subunit IF-1, IF-2 and IF-3 are released leaving the mature 70S translation initiation complex. The polypeptide is Translation initiation factor IF-1 (Xylella fastidiosa (strain 9a5c)).